The primary structure comprises 359 residues: Tropomodulin-1 (359 aa).

The segment at 36–61 (ELDPDNALLPAGLRQKDQTTKAPTGP) is disordered. Residues 39 to 138 (PDNALLPAGL…CDIAAILGMH (100 aa)) form a tropomyosin-binding region.

It belongs to the tropomodulin family. In terms of assembly, binds to the N-terminus of tropomyosin and to actin. Interacts with FLII.

It localises to the cytoplasm. Its subcellular location is the cytoskeleton. In terms of biological role, blocks the elongation and depolymerization of the actin filaments at the pointed end. The Tmod/TM complex contributes to the formation of the short actin protofilament, which in turn defines the geometry of the membrane skeleton. The polypeptide is Tropomodulin-1 (Tmod1) (Rattus norvegicus (Rat)).